Reading from the N-terminus, the 114-residue chain is MGFPIPDPYVWDPSFRTFYTAIDDEHKTLFDGIFHLARDDNKDNLGELRRCTGKHFLNEQVMMQASQYAGYDEHKKAHDEFIHQLDHWKGDSNWAKTWLVNHIKTIDFKYKGKI.

Fe cation contacts are provided by His26, His55, Glu59, His74, His78, His102, and Asp107.

This sequence belongs to the hemerythrin family.

Its function is as follows. Hemerythrin is a respiratory protein in blood cells of certain marine worms. The oxygen-binding site in each chain contains two iron atoms. This is Hemerythrin subunit 1 from Golfingia vulgaris (Marine worm).